The sequence spans 129 residues: Glycine cleavage system H protein (129 aa).

The Lipoyl-binding domain occupies 24 to 106; that stretch reads TYTVGITEHA…YVGGWIFKIK (83 aa). Lysine 65 carries the N6-lipoyllysine modification.

The protein belongs to the GcvH family. The glycine cleavage system is composed of four proteins: P, T, L and H. The cofactor is (R)-lipoate.

In terms of biological role, the glycine cleavage system catalyzes the degradation of glycine. The H protein shuttles the methylamine group of glycine from the P protein to the T protein. The sequence is that of Glycine cleavage system H protein from Salmonella paratyphi B (strain ATCC BAA-1250 / SPB7).